The following is a 274-amino-acid chain: 2,3,4,5-tetrahydropyridine-2,6-dicarboxylate N-succinyltransferase (274 aa).

2 residues coordinate substrate: arginine 104 and aspartate 141.

It belongs to the transferase hexapeptide repeat family. In terms of assembly, homotrimer.

It localises to the cytoplasm. The enzyme catalyses (S)-2,3,4,5-tetrahydrodipicolinate + succinyl-CoA + H2O = (S)-2-succinylamino-6-oxoheptanedioate + CoA. Its pathway is amino-acid biosynthesis; L-lysine biosynthesis via DAP pathway; LL-2,6-diaminopimelate from (S)-tetrahydrodipicolinate (succinylase route): step 1/3. The polypeptide is 2,3,4,5-tetrahydropyridine-2,6-dicarboxylate N-succinyltransferase (Wigglesworthia glossinidia brevipalpis).